Here is a 388-residue protein sequence, read N- to C-terminus: Glycoprotein-N-acetylgalactosamine 3-beta-galactosyltransferase 1 (388 aa).

Topologically, residues Met1–Ser12 are cytoplasmic. The chain crosses the membrane as a helical; Signal-anchor for type II membrane protein span at residues Leu13–Val30. Residues Lys31–Ser388 are Lumenal-facing. The segment at Ser43–Ser65 is disordered. Asn80 carries an N-linked (GlcNAc...) asparagine glycan. Cysteines 95 and 119 form a disulfide. UDP contacts are provided by Met98, Asn100, Glu142, Gly143, Arg144, Lys150, and Asp173. Mn(2+) is bound by residues Asp173 and Asp175. A disulfide bond links Cys238 and Cys253. Trp292 contributes to the a glycoprotein binding site. A disulfide bond links Cys307 and Cys308. Positions 316 and 317 each coordinate UDP. Residue His316 coordinates Mn(2+). The interval Ser344–Ser388 is disordered. Residues Glu347–Glu368 are compositionally biased toward basic and acidic residues. Asn376 carries N-linked (GlcNAc...) asparagine glycosylation.

The protein belongs to the glycosyltransferase 31 family. Beta3-Gal-T subfamily. In terms of assembly, homodimer; disulfide-linked. It depends on Mn(2+) as a cofactor.

It is found in the membrane. The enzyme catalyses an N-acetyl-alpha-D-galactosaminyl derivative + UDP-alpha-D-galactose = a beta-D-galactosyl-(1-&gt;3)-N-acetyl-alpha-D-galactosaminyl derivative + UDP + H(+). Its pathway is protein modification; protein glycosylation. Its function is as follows. Glycosyltransferase that generates the core 1 O-glycan Gal-beta1-3GalNAc-alpha1-Ser/Thr (T antigen), which is a precursor for many extended O-glycans in glycoproteins. In Biomphalaria glabrata (Bloodfluke planorb), this protein is Glycoprotein-N-acetylgalactosamine 3-beta-galactosyltransferase 1.